The primary structure comprises 261 residues: Glucose 1-dehydrogenase (261 aa).

11 to 35 is a binding site for NADP(+); it reads VITGSSTGLGKSMAIRFATEKAKVV. S145 contacts substrate. Y158 functions as the Proton acceptor in the catalytic mechanism.

It belongs to the short-chain dehydrogenases/reductases (SDR) family. Homotetramer.

It catalyses the reaction D-glucose + NAD(+) = D-glucono-1,5-lactone + NADH + H(+). The enzyme catalyses D-glucose + NADP(+) = D-glucono-1,5-lactone + NADPH + H(+). The protein is Glucose 1-dehydrogenase of Priestia megaterium (Bacillus megaterium).